A 218-amino-acid polypeptide reads, in one-letter code: Zinc finger BED domain-containing protein 2 (218 aa).

Residues 1-11 (MMRREDEEEEG) are compositionally biased toward acidic residues. Residues 1 to 24 (MMRREDEEEEGTMMKAKGDLEMKE) are disordered. The BED-type zinc-finger motif lies at 52–113 (TRFSEAWEYF…SMHREELEKS (62 aa)). The Zn(2+) site is built by C78, C81, H101, and H106. Positions 104–137 (SMHREELEKSGHGQAGQRQDPRPHGPQLPTGIEG) are disordered. The span at 105–114 (MHREELEKSG) shows a compositional bias: basic and acidic residues.

As to expression, expressed in keratinocytes.

It is found in the nucleus. Functionally, transcriptional regulator which has intrinsic repressor activity and which competes with the transcriptional activator IRF1 for binding to the 5'-[CA]GAA[AC]C[CT]-3' consensus sequence in gene promoters. May thereby play a role in keratinocyte differentiation. This Homo sapiens (Human) protein is Zinc finger BED domain-containing protein 2 (ZBED2).